We begin with the raw amino-acid sequence, 617 residues long: Chaperone protein HscA homolog (617 aa).

This sequence belongs to the heat shock protein 70 family.

In terms of biological role, chaperone involved in the maturation of iron-sulfur cluster-containing proteins. Has a low intrinsic ATPase activity which is markedly stimulated by HscB. The protein is Chaperone protein HscA homolog of Actinobacillus pleuropneumoniae serotype 5b (strain L20).